The primary structure comprises 110 residues: Insulin (110 aa).

Residues Met-1–Ala-24 form the signal peptide. 3 cysteine pairs are disulfide-bonded: Cys-31/Cys-96, Cys-43/Cys-109, and Cys-95/Cys-100. The propeptide at Glu-57–Gln-87 is c peptide.

Belongs to the insulin family. In terms of assembly, heterodimer of a B chain and an A chain linked by two disulfide bonds.

The protein localises to the secreted. Its function is as follows. Insulin decreases blood glucose concentration. It increases cell permeability to monosaccharides, amino acids and fatty acids. It accelerates glycolysis, the pentose phosphate cycle, and glycogen synthesis in liver. This is Insulin (INS) from Ictidomys tridecemlineatus (Thirteen-lined ground squirrel).